Reading from the N-terminus, the 210-residue chain is Cytochrome c biogenesis ATP-binding export protein CcmA (210 aa).

Residues L3–L205 form the ABC transporter domain. ATP is bound at residue G37–T44.

The protein belongs to the ABC transporter superfamily. CcmA exporter (TC 3.A.1.107) family. The complex is composed of two ATP-binding proteins (CcmA) and two transmembrane proteins (CcmB).

Its subcellular location is the cell inner membrane. The catalysed reaction is heme b(in) + ATP + H2O = heme b(out) + ADP + phosphate + H(+). Its function is as follows. Part of the ABC transporter complex CcmAB involved in the biogenesis of c-type cytochromes; once thought to export heme, this seems not to be the case, but its exact role is uncertain. Responsible for energy coupling to the transport system. The protein is Cytochrome c biogenesis ATP-binding export protein CcmA of Pseudomonas putida (strain ATCC 47054 / DSM 6125 / CFBP 8728 / NCIMB 11950 / KT2440).